We begin with the raw amino-acid sequence, 382 residues long: Guanine nucleotide exchange factor for Rab-3A (382 aa).

The span at 1-17 shows a compositional bias: pro residues; the sequence is MWSGPPQPDQGLPPPLA. The segment at 1–60 is disordered; the sequence is MWSGPPQPDQGLPPPLAAVPVPWKSTDPCQGHRESPGALVETSAGEEAQGQEGPAAAQLD. A compositionally biased stretch (low complexity) spans 45–58; sequence GEEAQGQEGPAAAQ. The stretch at 73 to 161 forms a coiled coil; sequence EKGSEFLKEE…AEVTALKTLV (89 aa). The tract at residues 166–198 is disordered; it reads PASPNRELHPQLLSPTKAGPRKGHSRHKSTSST. Serine 168 and serine 179 each carry phosphoserine. Positions 184-194 are enriched in basic residues; that stretch reads GPRKGHSRHKS.

Belongs to the SEC2 family. In terms of assembly, interacts with RAB3A and IHPK1 through the coiled-coil domain. This interaction is competitive. IHPK1 kinase activity is not required for this interaction.

Its function is as follows. Guanine nucleotide exchange factor (GEF) which may activate RAB3A, a GTPase that regulates synaptic vesicle exocytosis. Promotes the exchange of GDP to GTP, converting inactive GDP-bound Rab proteins into their active GTP-bound form. May also activate RAB8A and RAB8B. In Homo sapiens (Human), this protein is Guanine nucleotide exchange factor for Rab-3A (RAB3IL1).